The following is an 823-amino-acid chain: Leucine--tRNA ligase (823 aa).

Positions 42 to 52 (PYPSGTLHMGH) match the 'HIGH' region motif. Residues 575 to 579 (KMSKS) carry the 'KMSKS' region motif. K578 contacts ATP.

Belongs to the class-I aminoacyl-tRNA synthetase family.

The protein localises to the cytoplasm. It carries out the reaction tRNA(Leu) + L-leucine + ATP = L-leucyl-tRNA(Leu) + AMP + diphosphate. The chain is Leucine--tRNA ligase from Legionella pneumophila subsp. pneumophila (strain Philadelphia 1 / ATCC 33152 / DSM 7513).